The primary structure comprises 448 residues: Protein ECM7 (448 aa).

The Cytoplasmic portion of the chain corresponds to 1 to 28 (MVMSRIRDTIARPFQNLTALEKVVQWLR). The helical transmembrane segment at 29 to 49 (LGTTLLIISFGLALTVGPLSS) threads the bilayer. Residues 50-204 (PRTLYMSRLD…MRSLKHKKAN (155 aa)) are Extracellular-facing. A helical membrane pass occupies residues 205-225 (VLHLLYAVISFQVCMLFFMIW). Residues 226–246 (YYYIKGRFMNALKERALVHIN) are Cytoplasmic-facing. A helical membrane pass occupies residues 247-267 (SLLSLVVFIGGLISSISLAWV). At 268-287 (NYTIQSRINTELEAFGFSYH) the chain is on the extracellular side. Residues 288–308 (LGVTWFALLWCFAGLISVSCL) form a helical membrane-spanning segment. The Cytoplasmic segment spans residues 309 to 448 (AWSGLEWCIS…VIKPSSALQF (140 aa)). 2 stretches are compositionally biased toward polar residues: residues 351-363 (YSQR…STSG) and 383-406 (VDLN…NISN). Disordered stretches follow at residues 351–411 (YSQR…GKHE) and 427–448 (RSSN…ALQF).

The protein resides in the membrane. Functionally, may be involved in cell wall organization and biogenesis. This is Protein ECM7 (ECM7) from Saccharomyces cerevisiae (strain ATCC 204508 / S288c) (Baker's yeast).